A 129-amino-acid chain; its full sequence is Small ribosomal subunit protein uS11 (129 aa).

This sequence belongs to the universal ribosomal protein uS11 family. In terms of assembly, part of the 30S ribosomal subunit. Interacts with proteins S7 and S18. Binds to IF-3.

In terms of biological role, located on the platform of the 30S subunit, it bridges several disparate RNA helices of the 16S rRNA. Forms part of the Shine-Dalgarno cleft in the 70S ribosome. The chain is Small ribosomal subunit protein uS11 from Xanthobacter autotrophicus (strain ATCC BAA-1158 / Py2).